The following is a 123-amino-acid chain: Large ribosomal subunit protein uL14 (123 aa).

It belongs to the universal ribosomal protein uL14 family. Part of the 50S ribosomal subunit. Forms a cluster with proteins L3 and L19. In the 70S ribosome, L14 and L19 interact and together make contacts with the 16S rRNA in bridges B5 and B8.

Its function is as follows. Binds to 23S rRNA. Forms part of two intersubunit bridges in the 70S ribosome. This is Large ribosomal subunit protein uL14 from Actinobacillus succinogenes (strain ATCC 55618 / DSM 22257 / CCUG 43843 / 130Z).